Consider the following 688-residue polypeptide: MSGAALGLEIVFVFFLALFLLHRYGDFKKQHRLVIIATLLAWYLCFLIVFILPLDVSTTIYNRCKLAVNSSPAESNSSFVTLAPSKQQCFKPWSYIPNGIMPIFWRVVYWTSQFLTWILLPFMQSYARSGGFSITGKIKTALIENAIYYGTYLLIFGAFLIYVAVNPKFNLQWNQLQTIGIAAANTWGLFLLVLLLGYGLVEIPRSHWNGAKRGYLLMKTYFKAAKLMTEKADAEENLEDIMEEVRKVSESIKYNHPLRKCVDTILKKCPTEYQERMGRNMDDYEDFDERQNSYPSEKSLVKLHKQVIYSVQRHRRTQVQWQILLEQAFYLEDVAKNETSATRQFVHTFQSQEPENKIIQYFYTPTVEWYWECLLRPWFYRVLAVVLAAFSVIVVWSECTFFSTRPVLSLVAVFIQLAEKTYNYIYIEMACFLTIFFLSICVYSTVFRIRVFNYYYLASHHQTDAYSLLFSGMLFCRLTPPLCLNFLGLTHMDATISHTDAQPTAYTSIMGSMKVLSFIADGFYIYYPMLVVILCIATYFSLGTRCLNLLGFQQFMGDSEMTSDLIDEGKELIRREKGRRQRQEEGENRRREWKERYGNREDSTRNRVVHTEQKESSFSETNTNRPLSKYTRTNGRTERDRIELLQDAEPLDFNADSINDDPLESDSGRYQPGGRYLSMSRSRIFEDV.

The Extracellular portion of the chain corresponds to methionine 1–glycine 3. A helical transmembrane segment spans residues alanine 4–leucine 21. At histidine 22–arginine 32 the chain is on the cytoplasmic side. A helical transmembrane segment spans residues leucine 33 to proline 53. The Extracellular portion of the chain corresponds to leucine 54–glycine 99. N-linked (GlcNAc...) asparagine glycosylation is present at asparagine 76. A helical transmembrane segment spans residues isoleucine 100 to leucine 120. Residues proline 121–glutamate 144 are Cytoplasmic-facing. A helical transmembrane segment spans residues asparagine 145 to valine 165. At asparagine 166–glycine 180 the chain is on the extracellular side. The helical transmembrane segment at isoleucine 181–valine 201 threads the bilayer. Over glutamate 202–arginine 381 the chain is Cytoplasmic. Residues phenylalanine 222 to tyrosine 254 adopt a coiled-coil conformation. A helical membrane pass occupies residues valine 382 to phenylalanine 402. Residues serine 403–tyrosine 426 lie on the Extracellular side of the membrane. Residues isoleucine 427–phenylalanine 447 traverse the membrane as a helical segment. The Cytoplasmic segment spans residues arginine 448–serine 467. Residues leucine 468–glycine 488 traverse the membrane as a helical segment. At leucine 489–valine 515 the chain is on the extracellular side. A helical transmembrane segment spans residues leucine 516–isoleucine 536. At alanine 537–valine 688 the chain is on the cytoplasmic side. Positions arginine 600–serine 617 are enriched in basic and acidic residues. The disordered stretch occupies residues arginine 600–glycine 673. Polar residues predominate over residues phenylalanine 618–asparagine 634. The span at glycine 635–leucine 644 shows a compositional bias: basic and acidic residues.

Belongs to the LIMR family.

The protein localises to the cell membrane. Its function is as follows. May associate with G-protein coupled receptors and regulate downstream signaling pathways. The sequence is that of G-protein coupled receptor-associated protein LMBRD2 from Gallus gallus (Chicken).